A 220-amino-acid polypeptide reads, in one-letter code: Putative O-methyltransferase Mmcs_3995 (220 aa).

S-adenosyl-L-methionine is bound by residues valine 47, glutamate 69, 71–72, serine 77, aspartate 95, and valine 96; that span reads GT. A substrate-binding site is contributed by aspartate 143. Aspartate 145 is an S-adenosyl-L-methionine binding site.

It belongs to the class I-like SAM-binding methyltransferase superfamily. Cation-dependent O-methyltransferase family.

In Mycobacterium sp. (strain MCS), this protein is Putative O-methyltransferase Mmcs_3995.